Here is a 194-residue protein sequence, read N- to C-terminus: Holliday junction branch migration complex subunit RuvA (194 aa).

Residues 1 to 64 form a domain I region; that stretch reads MIGRLRGILA…EDSVSLYGFL (64 aa). Residues 65–140 are domain II; it reads REGERRLFRD…RAADFSSGAP (76 aa). The interval 140-144 is flexible linker; sequence PITGQ. The interval 145–194 is domain III; the sequence is LGPDAVSEATVALQQLGYKPAEAARMARDAGAEGDEVATVIRKALQAALR.

Belongs to the RuvA family. As to quaternary structure, homotetramer. Forms an RuvA(8)-RuvB(12)-Holliday junction (HJ) complex. HJ DNA is sandwiched between 2 RuvA tetramers; dsDNA enters through RuvA and exits via RuvB. An RuvB hexamer assembles on each DNA strand where it exits the tetramer. Each RuvB hexamer is contacted by two RuvA subunits (via domain III) on 2 adjacent RuvB subunits; this complex drives branch migration. In the full resolvosome a probable DNA-RuvA(4)-RuvB(12)-RuvC(2) complex forms which resolves the HJ.

Its subcellular location is the cytoplasm. Functionally, the RuvA-RuvB-RuvC complex processes Holliday junction (HJ) DNA during genetic recombination and DNA repair, while the RuvA-RuvB complex plays an important role in the rescue of blocked DNA replication forks via replication fork reversal (RFR). RuvA specifically binds to HJ cruciform DNA, conferring on it an open structure. The RuvB hexamer acts as an ATP-dependent pump, pulling dsDNA into and through the RuvAB complex. HJ branch migration allows RuvC to scan DNA until it finds its consensus sequence, where it cleaves and resolves the cruciform DNA. This is Holliday junction branch migration complex subunit RuvA from Xanthomonas axonopodis pv. citri (strain 306).